The chain runs to 354 residues: Uroporphyrinogen decarboxylase (354 aa).

Residues Arg27–Arg31, Asp77, Tyr154, Thr209, and His327 each bind substrate.

It belongs to the uroporphyrinogen decarboxylase family. Homodimer.

The protein resides in the cytoplasm. The catalysed reaction is uroporphyrinogen III + 4 H(+) = coproporphyrinogen III + 4 CO2. It functions in the pathway porphyrin-containing compound metabolism; protoporphyrin-IX biosynthesis; coproporphyrinogen-III from 5-aminolevulinate: step 4/4. Functionally, catalyzes the decarboxylation of four acetate groups of uroporphyrinogen-III to yield coproporphyrinogen-III. This is Uroporphyrinogen decarboxylase from Pseudomonas putida (strain GB-1).